We begin with the raw amino-acid sequence, 924 residues long: TBC1 domain family member 30 (924 aa).

A compositionally biased stretch (gly residues) spans 1–11 (MDVLPTGGGRP). Disordered regions lie at residues 1 to 76 (MDVL…GRTS) and 94 to 134 (EEEE…RSGA). The segment covering 47 to 59 (GAAERPRRSRDTW) has biased composition (basic and acidic residues). In terms of domain architecture, Rab-GAP TBC spans 249–457 (GIPKEWRRKV…KIWDSVFFEG (209 aa)). Disordered stretches follow at residues 541 to 564 (KPTSVSGRHSKARDSDEENDPDDE), 776 to 806 (GCTATAGREGSSPEGSTRRTIEGQSPEPVFG), and 838 to 924 (HPPC…TKKR). Over residues 555–564 (SDEENDPDDE) the composition is skewed to acidic residues. S800 carries the post-translational modification Phosphoserine. Polar residues predominate over residues 858–870 (TSKAPQGSNSKTP). Gly residues predominate over residues 914–924 (PGGGNSGTKKR).

It localises to the cell membrane. Its function is as follows. May act as a GTPase-activating protein for Rab family protein(s). This Homo sapiens (Human) protein is TBC1 domain family member 30 (TBC1D30).